We begin with the raw amino-acid sequence, 198 residues long: Paired-like homeodomain transcription factor LEUTX (198 aa).

The homeobox DNA-binding region spans 33 to 67 (PSLATMGKLASKLQLDLSVVKIWFKNQRAKWKRQQ). The tract at residues 65–133 (RQQRQQMQTR…PGGASASARV (69 aa)) is disordered. The tract at residues 79-190 (PANQTTSVKK…NQYLFPVCLE (112 aa)) is LEUTX region. Basic and acidic residues predominate over residues 110 to 119 (ANDHDLREPS). 4 consecutive short sequence motifs (9aaTAD) follow at residues 125–136 (GGASASARVSSW), 153–161 (PPWASTLFE), 163–171 (DEFVKIYDL), and 178–186 (SSLNQYLFP).

This sequence belongs to the paired homeobox family.

It localises to the nucleus. Its function is as follows. Paired-like homeobox transcription factor involved in embryogenesis. May act as a regulator of embryo genome activation. Binds to a 36 bp DNA elements containing a 5'-TAATCC-3' sequence motif, referred to as EEA motif (EGA-enriched Alu-motif), present in the promoters of target genes activated in early embryos. Inactive transcriptional activity. The chain is Paired-like homeodomain transcription factor LEUTX from Homo sapiens (Human).